The primary structure comprises 501 residues: Cytochrome P450 2J6 (501 aa).

A heme-binding site is contributed by Cys-447.

This sequence belongs to the cytochrome P450 family. The cofactor is heme.

It localises to the endoplasmic reticulum membrane. The protein localises to the microsome membrane. It catalyses the reaction an organic molecule + reduced [NADPH--hemoprotein reductase] + O2 = an alcohol + oxidized [NADPH--hemoprotein reductase] + H2O + H(+). This Mus musculus (Mouse) protein is Cytochrome P450 2J6 (Cyp2j6).